A 249-amino-acid polypeptide reads, in one-letter code: Probable transcriptional regulatory protein LIC_12886 (249 aa).

This sequence belongs to the TACO1 family.

It is found in the cytoplasm. In Leptospira interrogans serogroup Icterohaemorrhagiae serovar copenhageni (strain Fiocruz L1-130), this protein is Probable transcriptional regulatory protein LIC_12886.